The sequence spans 323 residues: Alpha-tubulin N-acetyltransferase 1 (323 aa).

One can recognise an N-acetyltransferase domain in the interval 1 to 190; that stretch reads MEFPFDVDAL…NNFVIFEGFF (190 aa). The residue at position 56 (K56) is an N6-acetyllysine; by autocatalysis. Residue 124–137 coordinates acetyl-CoA; sequence FYIHESVQRHGHGR. The residue at position 146 (K146) is an N6-acetyllysine; by autocatalysis. 160-169 is a binding site for acetyl-CoA; it reads SQKLLKFLNK. Residues 196–239 are disordered; sequence PPAPSLRATRHSRAAAVDPTPTAPARKLPPKRAEGDIKPYSSSD. The span at 209–220 shows a compositional bias: low complexity; it reads AAAVDPTPTAPA. Residues 226–239 are compositionally biased toward basic and acidic residues; the sequence is KRAEGDIKPYSSSD. Residues K233 and K244 each carry the N6-acetyllysine; by autocatalysis modification. A disordered region spans residues 252–287; that stretch reads PLNRAPRRATPPAHPPPRSSSLGNSPERGPLRPFVP. Phosphoserine occurs at positions 272 and 276. Residue R305 is modified to Asymmetric dimethylarginine. A Phosphoserine modification is found at S315. Residue R323 is modified to Omega-N-methylarginine.

This sequence belongs to the acetyltransferase ATAT1 family. As to quaternary structure, component of the BBSome complex. Interacts with AP2 alpha-adaptins, including AP2A2, but not with AP1 gamma-adaptin (AP1G1/AP1G2); this interaction is required for efficient alpha-tubulin acetylation, hence clathrin-coated pits are sites of microtubule acetylation. Post-translationally, autoacetylation strongly increases tubulin acetylation.

Its subcellular location is the cytoplasm. The protein localises to the membrane. It localises to the clathrin-coated pit. It is found in the cell junction. The protein resides in the focal adhesion. Its subcellular location is the cell projection. The protein localises to the axon. It localises to the cytoskeleton. It is found in the spindle. The enzyme catalyses L-lysyl-[alpha-tubulin] + acetyl-CoA = N(6)-acetyl-L-lysyl-[alpha-tubulin] + CoA + H(+). Functionally, specifically acetylates 'Lys-40' in alpha-tubulin on the lumenal side of microtubules. Promotes microtubule destabilization and accelerates microtubule dynamics; this activity may be independent of acetylation activity. Acetylates alpha-tubulin with a slow enzymatic rate, due to a catalytic site that is not optimized for acetyl transfer. Enters the microtubule through each end and diffuses quickly throughout the lumen of microtubules. Acetylates only long/old microtubules because of its slow acetylation rate since it does not have time to act on dynamically unstable microtubules before the enzyme is released. Required for normal sperm flagellar function. Promotes directional cell locomotion and chemotaxis, through AP2A2-dependent acetylation of alpha-tubulin at clathrin-coated pits that are concentrated at the leading edge of migrating cells. May facilitate primary cilium assembly. The polypeptide is Alpha-tubulin N-acetyltransferase 1 (Macaca mulatta (Rhesus macaque)).